The sequence spans 595 residues: Grainyhead-like protein 3 homolog (595 aa).

Residues 29–92 (DAWSKYLENP…CDQVKRSCSE (64 aa)) form a transcription activation region. The Grh/CP2 DB domain occupies 221-454 (ANRDFEYTLE…DMETHPVLFI (234 aa)). The segment at 484–505 (SSQSFPKGLEAPPSKQQTSEDS) is disordered.

It belongs to the grh/CP2 family. Grainyhead subfamily.

The protein resides in the nucleus. In terms of biological role, transcription factor playing important roles in primary neurulation and in the differentiation of stratified epithelia of both ectodermal and endodermal origin. Binds directly to the consensus DNA sequence 5'-AACCGGTT-3' acting as an activator and repressor on distinct target genes. This Xenopus laevis (African clawed frog) protein is Grainyhead-like protein 3 homolog (grhl3).